We begin with the raw amino-acid sequence, 708 residues long: MTMDEQQSQAVAPVYVGGFLARYDQSPDEAELLLPRDVVEHWLHAQGQGQPSLSVALPLNINHDDTAVVGHVAAMQSVRDGLFCLGCVTSPRFLEIVRRASEKSELVSRGPVSPLQPDKVVEFLSGSYAGLSLSSRRCDDVEAATSLSGSETTPFKHVALCSVGRRRGTLAVYGRDPEWVTQRFPDLTAADRDGLRAQWQRCGSTAVDASGDPFRSDSYGLLGNSVDALYIRERLPKLRYDKQLVGVTERESYVKASVSPEAACDIKAASAERSGDSRSQAATPAAGARVPSSSPSPPVEPPSPVQPPALPASPSVLPAESPPSLSPSEPAEAASMSHPLSAAVPAATAPPGATVAGASPAVSSLAWPHDGVYLPKDAFFSLLGASRSAVPVMYPGAVAAPPSASPAPLPLPSYPASYGAPVVGYDQLAARHFADYVDPHYPGWGRRYEPAPSLHPSYPVPPPPSPAYYRRRDSPGGMDEPPSGWERYDGGHRGQSQKQHRHGGSGGHNKRRKETAAASSSSSDEDLSFPGEAEHGRARKRLKSHVNSDGGSGGHAGSNQQQQQRYDELRDAIHELKRDLFAARQSSTLLSAALPSAASSSPTTTTVCTPTGELTSGGGETPTALLSGGAKVAERAQAGVVNASCRLATASGSEAATAGPSTAGSSSCPASVVLAAAAAQAAAASQSPPKDMVDLNRRIFVAALNKLE.

Residues His-63, Ser-132, and His-157 each act as charge relay system in the active site. Disordered regions lie at residues 269 to 339 (ASAE…MSHP), 455 to 565 (HPSY…QQQR), and 593 to 619 (ALPS…SGGG). The span at 284 to 293 (PAAGARVPSS) shows a compositional bias: low complexity. The segment covering 294-311 (SPSPPVEPPSPVQPPALP) has biased composition (pro residues). A compositionally biased stretch (low complexity) spans 326 to 339 (SPSEPAEAASMSHP). The segment at 333 to 352 (AASMSHPLSAAVPAATAPPG) is interaction with pAP. The segment covering 498-513 (KQHRHGGSGGHNKRRK) has biased composition (basic residues). 2 short sequence motifs (nuclear localization signal) span residues 510–515 (KRRKET) and 537–543 (RARKRLK). The span at 593 to 611 (ALPSAASSSPTTTTVCTPT) shows a compositional bias: low complexity. An interaction with major capsid protein region spans residues 688–708 (PPKDMVDLNRRIFVAALNKLE).

This sequence belongs to the herpesviridae capsid scaffolding protein family. As to quaternary structure, homomultimer. Interacts with major capsid protein. In terms of assembly, exists in a monomer-dimer equilibrium with the dimer being the active species. In terms of processing, capsid scaffolding protein is cleaved by assemblin after formation of the spherical procapsid. As a result, the capsid obtains its mature, icosahedral shape. Cleavages occur at two or more sites: release (R-site) and maturation (M-site).

Its subcellular location is the host cytoplasm. It localises to the host nucleus. It carries out the reaction Cleaves -Ala-|-Ser- and -Ala-|-Ala- bonds in the scaffold protein.. Functionally, acts as a scaffold protein by binding major capsid protein in the cytoplasm, inducing the nuclear localization of both proteins. Multimerizes in the nucleus such as major capsid protein forms the icosahedral T=16 capsid. Autocatalytic cleavage releases the assembly protein, and subsequently abolishes interaction with major capsid protein. Cleavages products are evicted from the capsid before or during DNA packaging. Its function is as follows. Protease that plays an essential role in virion assembly within the nucleus. Catalyzes the cleavage of the assembly protein after formation of the spherical procapsid. By that cleavage, the capsid matures and gains its icosahedral shape. The cleavage sites seem to include -Ala-Ser-, -Ala-Ala-, as well as Ala-Thr bonds. Assemblin and cleavages products are evicted from the capsid before or during DNA packaging. Plays a major role in capsid assembly. Acts as a scaffold protein by binding major capsid protein. Multimerizes in the nucleus such as major capsid protein forms the icosahedral T=16 capsid. Cleaved by assemblin after capsid completion. The cleavages products are evicted from the capsid before or during DNA packaging. The polypeptide is Capsid scaffolding protein (UL80) (Homo sapiens (Human)).